The sequence spans 207 residues: Large ribosomal subunit protein uL4 (207 aa).

The disordered stretch occupies residues 48–75 (THAVKNRSAVSGGGRKPWKQKGTGRARA).

The protein belongs to the universal ribosomal protein uL4 family. In terms of assembly, part of the 50S ribosomal subunit.

One of the primary rRNA binding proteins, this protein initially binds near the 5'-end of the 23S rRNA. It is important during the early stages of 50S assembly. It makes multiple contacts with different domains of the 23S rRNA in the assembled 50S subunit and ribosome. Its function is as follows. Forms part of the polypeptide exit tunnel. The polypeptide is Large ribosomal subunit protein uL4 (Leuconostoc citreum (strain KM20)).